The sequence spans 164 residues: Peptidyl-prolyl cis-trans isomerase A-like 4H (164 aa).

One can recognise a PPIase cyclophilin-type domain in the interval 7–163 (FFDITVDGKP…KKITIADCGQ (157 aa)). N-linked (GlcNAc...) asparagine glycans are attached at residues Asn-71 and Asn-108.

Belongs to the cyclophilin-type PPIase family. PPIase A subfamily.

The protein localises to the cytoplasm. The enzyme catalyses [protein]-peptidylproline (omega=180) = [protein]-peptidylproline (omega=0). Functionally, PPIases accelerate the folding of proteins. It catalyzes the cis-trans isomerization of proline imidic peptide bonds in oligopeptides. This chain is Peptidyl-prolyl cis-trans isomerase A-like 4H, found in Homo sapiens (Human).